A 457-amino-acid polypeptide reads, in one-letter code: Chromosomal replication initiator protein DnaA (457 aa).

The segment at 1 to 75 (MDAQLNNLWE…ALKIVTSRKF (75 aa)) is domain I, interacts with DnaA modulators. The tract at residues 75–118 (FKIEFYLESDLEEEKENEEKQKEEKKENTNDVDGSIVVSDEMSA) is domain II. The tract at residues 119–335 (TLNPKYTFQS…GALIRIIAYS (217 aa)) is domain III, AAA+ region. ATP-binding residues include G163, G165, K166, and T167. Positions 336-457 (SLTNRDVSVD…NDITKKLTQK (122 aa)) are domain IV, binds dsDNA.

This sequence belongs to the DnaA family. As to quaternary structure, oligomerizes as a right-handed, spiral filament on DNA at oriC.

It is found in the cytoplasm. In terms of biological role, plays an essential role in the initiation and regulation of chromosomal replication. ATP-DnaA binds to the origin of replication (oriC) to initiate formation of the DNA replication initiation complex once per cell cycle. Binds the DnaA box (a 9 base pair repeat at the origin) and separates the double-stranded (ds)DNA. Forms a right-handed helical filament on oriC DNA; dsDNA binds to the exterior of the filament while single-stranded (ss)DNA is stabiized in the filament's interior. The ATP-DnaA-oriC complex binds and stabilizes one strand of the AT-rich DNA unwinding element (DUE), permitting loading of DNA polymerase. After initiation quickly degrades to an ADP-DnaA complex that is not apt for DNA replication. Binds acidic phospholipids. The sequence is that of Chromosomal replication initiator protein DnaA from Clostridium perfringens (strain ATCC 13124 / DSM 756 / JCM 1290 / NCIMB 6125 / NCTC 8237 / Type A).